Consider the following 583-residue polypeptide: Radixin (583 aa).

The FERM domain occupies 5–295 (INVRVTTMDA…GNHELYMRRR (291 aa)). Residue 60–63 (KLNK) coordinates a 1,2-diacyl-sn-glycero-3-phospho-(1D-myo-inositol). Lysine 83 bears the N6-succinyllysine mark. An a 1,2-diacyl-sn-glycero-3-phospho-(1D-myo-inositol)-binding site is contributed by lysine 278. Disordered regions lie at residues 310–330 (REEK…KKKR), 376–407 (DQER…AKQA), and 462–526 (ELKT…RVKK). Residues 376-400 (DQERKRAKEEAERLEKERRAAEEAK) show a composition bias toward basic and acidic residues. The segment covering 469 to 480 (APPPPPPPPVIP) has biased composition (pro residues). Basic and acidic residues-rich tracts occupy residues 483–492 (ENEHDEHDEN) and 506–525 (MNHR…ERVK). Threonine 564 carries the phosphothreonine; by ROCK2 modification.

Binds NHERF1. Interacts with NHERF1, NHERF2, LAYN, MME/NEP and ICAM2. Interacts with CPNE1 (via VWFA domain) and CPNE4 (via VWFA domain). Interacts (via FERM domain) with SPN/CD43 cytoplasmic tail. Interacts with CD44. Interacts with CLIC5; may work together in a complex which also includes EZR and MYO6 to stabilize linkages between the plasma membrane and subjacent actin cytoskeleton at the base of stereocilia. Phosphorylated by tyrosine-protein kinases. Phosphorylation by ROCK2 suppresses the head-to-tail association of the N-terminal and C-terminal halves resulting in an opened conformation which is capable of actin and membrane-binding.

It localises to the cell membrane. It is found in the cytoplasm. The protein localises to the cytoskeleton. Its subcellular location is the cleavage furrow. The protein resides in the cell projection. It localises to the microvillus. It is found in the stereocilium. With respect to regulation, a head-to-tail association, of the N-terminal and C-terminal halves results in a closed conformation (inactive form) which is incapable of actin or membrane-binding. Probably plays a crucial role in the binding of the barbed end of actin filaments to the plasma membrane. This Homo sapiens (Human) protein is Radixin (RDX).